Here is a 344-residue protein sequence, read N- to C-terminus: Follistatin (344 aa).

Positions 1–29 (MARPRHQPGGLCLLLLLLCQFMEDRSAQA) are cleaved as a signal peptide. Residues 30-103 (GNCWLRQAKN…TCENVDCGPG (74 aa)) enclose the TB domain. Disulfide bonds link C32/C55, C42/C88, C56/C91, C95/C106, C100/C116, C118/C150, C122/C143, and C132/C164. A Follistatin-like 1 domain is found at 94–117 (TCENVDCGPGKKCRMNKKNKPRCV). 3 consecutive Kazal-like domains span residues 112–166 (NKPR…KCKK), 186–241 (NAYC…KCIK), and 261–318 (KVGR…SCNS). N124 is a glycosylation site (N-linked (GlcNAc...) asparagine). The region spanning 167–190 (TCRDVFCPGSSTCVVDQTNNAYCV) is the Follistatin-like 2 domain. Intrachain disulfides connect C192–C225, C196–C218, and C207–C239. Residues 244–268 (SCDDIQCTGGKKCLWDFKVGRGRCS) form the Follistatin-like 3 domain. Intrachain disulfides connect C270/C302, C274/C295, and C284/C316. N-linked (GlcNAc...) asparagine glycosylation is present at N288. Residues 316–344 (CNSISEDTEDEEEDEDQDYSFPISSILEW) form a disordered region. Positions 321–333 (EDTEDEEEDEDQD) are enriched in acidic residues.

In terms of assembly, interacts with GDF11. Interacts with activin A/INHBA. Interacts with myostatin/MSTN.

It is found in the secreted. It localises to the nucleus. The protein resides in the nucleolus. Functionally, multifunctional regulatory protein whose primary function is to antagonize members of the transforming growth factor beta (TGF-beta) superfamily including activin, myostatin, GDF11 or bone morphogenetic proteins (BMPs). Mechanistically, binds to these ligands in the extracellular space, blocking their type II receptor-binding site to inhibit downstream signaling. Plays an essential role in muscle fiber formation and growth both by preventing the repressive effects of myostatin and through SMAD3/AKT/mTOR signaling independently of myostatin. Also promotes neural differentiation by antagonizing the action BMP4. Acts as a specific inhibitor of the biosynthesis and secretion of pituitary follicle stimulating hormone (FSH) by sequestering activin A/INHBA. On the other hand, translocates into the nucleus where it down-regulates rRNA synthesis and ribosome biogenesis to maintain cellular energy homeostasis by binding to rDNA. This is Follistatin from Bos taurus (Bovine).